We begin with the raw amino-acid sequence, 778 residues long: Ubiquitin thioesterase trabid (778 aa).

2 RanBP2-type zinc fingers span residues 5–36 and 89–118; these read KDDAQKWKCETCTYENYPSSLKCTMCQASKPL and DSEKWPCKVCTYLNWPRSLRCVQCCTKRGG. Residues 187–197 show a composition bias toward polar residues; the sequence is ASHNQSQSQHR. Residues 187-226 are disordered; that stretch reads ASHNQSQSQHRQPVLQQQMQLQLQPQQQRESSSSAAVPPQ. Residues 198–226 are compositionally biased toward low complexity; it reads QPVLQQQMQLQLQPQQQRESSSSAAVPPQ. Residues 232–261 form a RanBP2-type 3 zinc finger; it reads YVSKWACNSCTYENWPRSIKCSMCGKTRER. The tract at residues 265–290 is disordered; the sequence is GSQNDLHASSSLNSQEENQQQLQQPN. Residues 273-288 are compositionally biased toward low complexity; it reads SSSLNSQEENQQQLQQ. Residues 507 to 665 form the OTU domain; that stretch reads MFVLWNRSAG…RGHFSALVPM (159 aa). The Nucleophile role is filled by cysteine 518. Histidine 658 functions as the Proton acceptor in the catalytic mechanism. Phosphoserine occurs at positions 770, 771, and 775.

This sequence belongs to the peptidase C64 family. As to quaternary structure, interacts with Apc.

It catalyses the reaction Thiol-dependent hydrolysis of ester, thioester, amide, peptide and isopeptide bonds formed by the C-terminal Gly of ubiquitin (a 76-residue protein attached to proteins as an intracellular targeting signal).. In terms of biological role, positive regulator of the Wnt signaling pathway. Specifically cleaves 'Lys-63'-linked ubiquitin chains. May act by deubiquitinating APC protein, a negative regulator of Wnt-mediated transcription. Required for an efficient wg response, but not for other signaling responses, in the eye. In Drosophila melanogaster (Fruit fly), this protein is Ubiquitin thioesterase trabid (trbd).